The primary structure comprises 911 residues: Protein translocase subunit SecA (911 aa).

ATP is bound by residues Gln-87, 105–109 (GEGKT), and Asp-512. Residues 865 to 892 (AAEQDGAEEGAVATATAPVRSENKVGRN) are disordered. Positions 873–883 (EGAVATATAPV) are enriched in low complexity. Positions 895, 897, 906, and 907 each coordinate Zn(2+).

It belongs to the SecA family. Monomer and homodimer. Part of the essential Sec protein translocation apparatus which comprises SecA, SecYEG and auxiliary proteins SecDF-YajC and YidC. Zn(2+) is required as a cofactor.

It localises to the cell inner membrane. The protein resides in the cytoplasm. It catalyses the reaction ATP + H2O + cellular proteinSide 1 = ADP + phosphate + cellular proteinSide 2.. Functionally, part of the Sec protein translocase complex. Interacts with the SecYEG preprotein conducting channel. Has a central role in coupling the hydrolysis of ATP to the transfer of proteins into and across the cell membrane, serving both as a receptor for the preprotein-SecB complex and as an ATP-driven molecular motor driving the stepwise translocation of polypeptide chains across the membrane. The chain is Protein translocase subunit SecA from Ectopseudomonas mendocina (strain ymp) (Pseudomonas mendocina).